A 1544-amino-acid chain; its full sequence is GATOR complex protein Iml1 (1544 aa).

2 disordered regions span residues 615–649 (QAVPAKPTQAGQQRPLQQTQSNNNNDQEDYGCENG) and 1037–1072 (RRHSTSIISRPQPNQGLTNSPFRERVGSNRLPEKRP). Polar residues-rich tracts occupy residues 623–639 (QAGQQRPLQQTQSNNNN) and 1041–1057 (TSIISRPQPNQGLTNSP). The span at 1058–1072 (FRERVGSNRLPEKRP) shows a compositional bias: basic and acidic residues.

It belongs to the IML1 family. In terms of assembly, component of the GATOR complex consisting of mio, Nup44A/Seh1, Im11, Nplr3, Nplr2, Wdr24, Wdr59 and Sec13. Within the GATOR complex, probable component of the GATOR1 subcomplex which is likely composed of Iml1, Nplr2 and Nplr3.

Its function is as follows. An essential component of the GATOR subcomplex GATOR1 which functions as an inhibitor of the amino acid-sensing branch of the TORC1 signaling pathway. The two GATOR subcomplexes, GATOR1 and GATOR2, regulate the TORC1 pathway in order to mediate metabolic homeostasis, female gametogenesis and the response to amino acid limitation and complete starvation. The function of GATOR1 in negatively regulating the TORC1 pathway is essential for maintaining baseline levels of TORC1 activity under nutrient rich conditions, and for promoting survival during amino acid or complete starvation by inhibiting TORC1-dependent cell growth and promoting catabolic metabolism and autophagy. GATOR1 and GATOR2 act at different stages of oogenesis to regulate TORC1 in order to control meiotic entry and promote oocyte growth and development. After exactly four mitotic cyst divisions, the GATOR1 complex members (Iml1, Nprl2 and Nprl3) down-regulate TORC1 to slow cellular metabolism and promote the mitotic/meiotic transition. At later stages of oogenesis, the mio and Nup44A components of the GATOR2 complex inhibit GATOR1 and thus activate TORC1 to promote meiotic progression, and drive oocyte growth and development. The sequence is that of GATOR complex protein Iml1 from Drosophila melanogaster (Fruit fly).